The sequence spans 110 residues: Nucleoid-associated protein YpAngola_A2890 (110 aa).

Residues 90-110 form a disordered region; the sequence is KEKMASVSNGMQLPPGFKMPF.

Belongs to the YbaB/EbfC family. As to quaternary structure, homodimer.

It is found in the cytoplasm. It localises to the nucleoid. Functionally, binds to DNA and alters its conformation. May be involved in regulation of gene expression, nucleoid organization and DNA protection. The polypeptide is Nucleoid-associated protein YpAngola_A2890 (Yersinia pestis bv. Antiqua (strain Angola)).